The chain runs to 187 residues: Holliday junction resolvase (187 aa).

This sequence belongs to the RuvC family. Poxviruses-type subfamily. The cofactor is Mg(2+). Post-translationally, acylated by palmitic acid group(s).

It is found in the membrane. Functionally, nuclease that specifically cleaves and resolves four-way DNA Holliday junctions into linear duplex products. The chain is Holliday junction resolvase from Vaccinia virus (strain Ankara) (VACV).